The primary structure comprises 242 residues: Type III pantothenate kinase (242 aa).

Residue 6 to 13 (DAGNTRIK) participates in ATP binding. Residues Tyr90 and 97–100 (GADR) contribute to the substrate site. The active-site Proton acceptor is the Asp99. Thr122 is a binding site for ATP. Position 172 (Thr172) interacts with substrate.

This sequence belongs to the type III pantothenate kinase family. In terms of assembly, homodimer. NH4(+) serves as cofactor. The cofactor is K(+).

Its subcellular location is the cytoplasm. It catalyses the reaction (R)-pantothenate + ATP = (R)-4'-phosphopantothenate + ADP + H(+). The protein operates within cofactor biosynthesis; coenzyme A biosynthesis; CoA from (R)-pantothenate: step 1/5. Its function is as follows. Catalyzes the phosphorylation of pantothenate (Pan), the first step in CoA biosynthesis. The chain is Type III pantothenate kinase from Aromatoleum aromaticum (strain DSM 19018 / LMG 30748 / EbN1) (Azoarcus sp. (strain EbN1)).